Consider the following 678-residue polypeptide: F-box/LRR-repeat protein 5 (678 aa).

The hemerythrin-like stretch occupies residues 1 to 159; the sequence is MAPFPDEVDL…IKKKVIAQHC (159 aa). Fe(3+) contacts are provided by His-15, His-57, Glu-58, Glu-61, His-80, His-126, and Glu-130. In terms of domain architecture, F-box spans 202-248; that stretch reads SSSISSLPPEVMLNIFTYLNPQDLCRCSQVNTEWAQLAKTGSLWRHL. The segment at 285–308 is disordered; it reads YQEWDEDADIDESEETGEEEDSSI. Over residues 287 to 306 the composition is skewed to acidic residues; that stretch reads EWDEDADIDESEETGEEEDS. 7 LRR repeats span residues 314–340, 341–366, 367–392, 393–420, 566–594, 595–622, and 623–648; these read EKEL…VLAY, SSAT…DLTQ, TDIS…DLSG, CDKI…RLLK, HSDI…SLSG, CHQI…NLSG, and CLNV…HFYY. [2Fe-2S] cluster is bound by residues Cys-649, Cys-663, Cys-673, and Cys-674. The LRR 8 repeat unit spans residues 655-678; that stretch reads PHGATASGCQNLQCGFRMCCRSGE.

In terms of assembly, part of a SCF (SKP1-cullin-F-box) protein ligase complex. The cofactor is [2Fe-2S] cluster. Ubiquitinated upon iron and oxygen depletion, leading to its degradation by the proteasome. Ubiquitination is regulated by the hemerythrin-like region that acts as an oxygen and iron sensor.

It localises to the cytoplasm. It is found in the perinuclear region. The protein localises to the nucleus. Its pathway is protein modification; protein ubiquitination. Component of some SCF (SKP1-cullin-F-box) protein ligase complex that plays a central role in iron homeostasis by promoting the ubiquitination and subsequent degradation of ireb2/irp2. Upon high iron and oxygen level, it specifically recognizes and binds ireb2/irp2, promoting its ubiquitination and degradation by the proteasome. The protein is F-box/LRR-repeat protein 5 (fbxl5) of Xenopus laevis (African clawed frog).